Consider the following 402-residue polypeptide: MEQKISVALKEIKRGANEIIGLEYIEKLVRKYYETNERFIVKAGFDPTAPDLHLGHTVLIQKLALLQQYGARVKFLIGDFTAMIGDPTGKNETRKPLNREQVLENAKTYKEQIYKILDQKHTEVCFNSAWLDALGAKGMIELCAKFSVARMLERDDFAKRYKENRPISIVEFLYPLLQGYDSVAMGADIELGGNDQKFNLLVGRFLQRAYGLNKEQSIITMPLLEGLDGVQKMSKSLGNYVGITEEPNAMFGKIMSVSDDLMWRYYTLLSAKTLEEIEDLKHGILHQTLHPKAVKEDLASEIVARYYDNDQAFKAKEQFSKVFSANLLPEILLESDFDEGVGVLDVLKQIGFCPSTSQARRDIQGGGVKINQEVVKDESYRFVKGNYVIQLGKKRFMKLNIN.

The short motif at 47-56 (PTAPDLHLGH) is the 'HIGH' region element. Residues 232 to 236 (KMSKS) carry the 'KMSKS' region motif. Lys235 provides a ligand contact to ATP. An S4 RNA-binding domain is found at 341 to 401 (VGVLDVLKQI…GKKRFMKLNI (61 aa)).

It belongs to the class-I aminoacyl-tRNA synthetase family. TyrS type 2 subfamily. As to quaternary structure, homodimer.

It localises to the cytoplasm. The catalysed reaction is tRNA(Tyr) + L-tyrosine + ATP = L-tyrosyl-tRNA(Tyr) + AMP + diphosphate + H(+). In terms of biological role, catalyzes the attachment of tyrosine to tRNA(Tyr) in a two-step reaction: tyrosine is first activated by ATP to form Tyr-AMP and then transferred to the acceptor end of tRNA(Tyr). The chain is Tyrosine--tRNA ligase from Helicobacter pylori (strain J99 / ATCC 700824) (Campylobacter pylori J99).